A 406-amino-acid chain; its full sequence is Tryptophan synthase beta chain (406 aa).

N6-(pyridoxal phosphate)lysine is present on K99.

This sequence belongs to the TrpB family. Tetramer of two alpha and two beta chains. It depends on pyridoxal 5'-phosphate as a cofactor.

The enzyme catalyses (1S,2R)-1-C-(indol-3-yl)glycerol 3-phosphate + L-serine = D-glyceraldehyde 3-phosphate + L-tryptophan + H2O. It functions in the pathway amino-acid biosynthesis; L-tryptophan biosynthesis; L-tryptophan from chorismate: step 5/5. Its function is as follows. The beta subunit is responsible for the synthesis of L-tryptophan from indole and L-serine. This Rhizobium leguminosarum bv. trifolii (strain WSM2304) protein is Tryptophan synthase beta chain.